The chain runs to 780 residues: Reticulon-1 (780 aa).

Disordered regions lie at residues 1–76, 128–176, 201–223, and 293–576; these read MAAP…VAME, QKEN…AEST, RPQE…LDFK, and MTAT…IPGP. 2 positions are modified to phosphoserine: Ser-13 and Ser-70. Ser-327 carries the post-translational modification Phosphoserine. Over residues 328–341 the composition is skewed to low complexity; it reads PGSVTPPSSGTEPS. Phosphoserine is present on residues Ser-350, Ser-352, and Ser-487. Residues 497-512 show a composition bias toward basic and acidic residues; sequence AIREETGSRATEERAP. Residues 593–780 form the Reticulon domain; it reads AIDLLYWRDI…KIPGAKRHAE (188 aa). 2 helical membrane-spanning segments follow: residues 607–627 and 709–729; these read IVFG…VVSV and FAVL…LTLL.

Interacts with NDRG1. Interacts with BACE1. Interacts with TMEM33.

Its subcellular location is the endoplasmic reticulum membrane. It is found in the golgi apparatus membrane. Inhibits amyloid precursor protein processing, probably by blocking BACE1 activity. The protein is Reticulon-1 (Rtn1) of Mus musculus (Mouse).